The sequence spans 1252 residues: ABC transporter B family member 19 (1252 aa).

A glycan (N-linked (GlcNAc...) asparagine) is linked at Asn5. Residues 41-330 (MFVGSLGAIV…SFSNLGAFSK (290 aa)) form the ABC transmembrane type-1 1 domain. 2 helical membrane-spanning segments follow: residues 42-62 (FVGS…FLLF) and 88-108 (LYFV…IACW). Residue Asp136 coordinates ATP. The next 4 helical transmembrane spans lie at 163–183 (VGNF…GFVS), 187–207 (LALL…LYAY), 274–294 (CTYG…GVFI), and 308–328 (IFSA…LGAF). Residues Tyr276 and Trp283 each contribute to the brassinolide site. An ABC transporter 1 domain is found at 365 to 601 (IEFKDVTFSY…SGAYASLIRF (237 aa)). The ATP site is built by Tyr374, Ser376, Gly405, Lys406, Ser407, Thr408, and Glu529. Asn641 carries N-linked (GlcNAc...) asparagine glycosylation. Residues 687 to 975 (SIMGAVGSIL…TVSLAPEIIR (289 aa)) form the ABC transmembrane type-1 2 domain. The next 2 membrane-spanning stretches (helical) occupy residues 688-708 (IMGA…AIVM) and 732-752 (FIYI…HYFF). The N-linked (GlcNAc...) asparagine glycan is linked to Asn758. Asp780 lines the ATP pocket. 2 N-linked (GlcNAc...) asparagine glycosylation sites follow: Asn785 and Asn814. Helical transmembrane passes span 822-842 (FIVA…TFPL), 914-934 (GFLF…ILWY), and 949-969 (VIKV…TVSL). The interaction with FKBP42/TWD1 stretch occupies residues 965–1252 (ETVSLAPEII…RLLQLQTHRI (288 aa)). The region spanning 1010–1246 (IEFRHVDFAY…PEGAYSRLLQ (237 aa)) is the ABC transporter 2 domain. Tyr1019, Ser1021, Arg1022, Lys1051, Ser1052, and Ser1053 together coordinate ATP.

This sequence belongs to the ABC transporter superfamily. ABCB family. Multidrug resistance exporter (TC 3.A.1.201) subfamily. Interacts with 1-naphthylphthalamic acid (NPA), and FKBP42/TWD1. Phosphorylated by PHOT1 in phototropic seedlings, to modulates auxin export and distribution and regulates leaf and petiole curling. As to expression, ubiquitous, mostly in shoot meristems. Present in the majority of stem cells, predominantly in a non-polar manner. Accumulates in seedlings roots and hypocotyls, and in roots apices and inflorescences.

Its subcellular location is the cell membrane. It catalyses the reaction (indol-3-yl)acetate(in) + ATP + H2O = (indol-3-yl)acetate(out) + ADP + phosphate + H(+). The enzyme catalyses brassinolide(in) + ATP + H2O = brassinolide(out) + ADP + phosphate + H(+). The catalysed reaction is 24-epi-brassinolide(in) + ATP + H2O = 24-epi-brassinolide(out) + ADP + phosphate + H(+). It carries out the reaction 24-epi-castasterone(in) + ATP + H2O = 24-epi-castasterone(out) + ADP + phosphate + H(+). It catalyses the reaction castasterone(in) + ATP + H2O = castasterone(out) + ADP + phosphate + H(+). Its activity is regulated as follows. Transport capacity is stimulated by the chaperone protein FKBP42/TWD1. ATPase activity is specifically activated by bioactive brassinosteroids in a dose-dependent manner, including brassinolide (BL), 24-epiBL and 24-epicastasterone (24-epiCS). Inhibited by vanadate. Its function is as follows. Brassinosteroid exporter that, in conjunction with ABCB1, supports the accumulation of exogenous brassinosteroids (BR) in the apoplast, thus promoting BR signaling initiation involving the specific receptor BRI1 and required for plant growth and stress responses. Mediates the transport of castasterone (CSA) and brassinolide (BL) across the plasma membrane. Auxin efflux transporter that acts as a negative regulator of light signaling to promote hypocotyl elongation by mediating leaf tip to petiole auxin flux. Required for the regulation of leaf position and morphology during PHOT1-mediated blue light responses involving auxin distribution, especially in low light fluence. Together with ABCB1 and in a FKBP42/TWD1-dependent manner, supports seed development by promoting stamen elongation and, to a lesser extent, anther dehiscence and pollen maturation, probably as auxin transporters. Contributes to the connective auxin transport (CAT) that ensures communication across the shoot system, including auxin loading at axillary bud apices to influence strigolactone-mediated bud outgrowth responses and shoot branching control. Mediates the accumulation of chlorophyll and anthocyanin, as well as the expression of genes in response to light. Participates in auxin efflux and thus regulates the polar auxin basipetal transport (from auxin-producing leaves to auxin-sensitive tissues, and from root tips to root elongating zone). Involved in diverse auxin-mediated responses including gravitropism, phototropism and lateral root formation. Required for the regulation of organ bending, such as gravitropic root bending. The protein is ABC transporter B family member 19 of Arabidopsis thaliana (Mouse-ear cress).